A 182-amino-acid polypeptide reads, in one-letter code: Isopentenyl-diphosphate Delta-isomerase (182 aa).

Residues His-25 and His-32 each coordinate Mn(2+). Residues 30 to 164 (LLHLAFSSWL…PWAFSPWMVM (135 aa)) form the Nudix hydrolase domain. Cys-67 is an active-site residue. His-69 is a binding site for Mn(2+). Glu-87 is a binding site for Mg(2+). Mn(2+) contacts are provided by Glu-114 and Glu-116. Glu-116 is an active-site residue.

The protein belongs to the IPP isomerase type 1 family. In terms of assembly, homodimer. Mg(2+) serves as cofactor. The cofactor is Mn(2+).

The protein localises to the cytoplasm. It carries out the reaction isopentenyl diphosphate = dimethylallyl diphosphate. Its pathway is isoprenoid biosynthesis; dimethylallyl diphosphate biosynthesis; dimethylallyl diphosphate from isopentenyl diphosphate: step 1/1. Its function is as follows. Catalyzes the 1,3-allylic rearrangement of the homoallylic substrate isopentenyl (IPP) to its highly electrophilic allylic isomer, dimethylallyl diphosphate (DMAPP). The sequence is that of Isopentenyl-diphosphate Delta-isomerase from Shigella boydii serotype 18 (strain CDC 3083-94 / BS512).